A 217-amino-acid chain; its full sequence is Probable GTP-binding protein EngB (217 aa).

The region spanning Thr-27–Glu-201 is the EngB-type G domain. Residues Gly-35 to Ser-42, Gly-62 to Leu-66, Asp-80 to Gly-83, Thr-147 to Asp-150, and Phe-180 to Ser-182 contribute to the GTP site. Mg(2+) is bound by residues Ser-42 and Thr-64.

Belongs to the TRAFAC class TrmE-Era-EngA-EngB-Septin-like GTPase superfamily. EngB GTPase family. The cofactor is Mg(2+).

Its function is as follows. Necessary for normal cell division and for the maintenance of normal septation. The polypeptide is Probable GTP-binding protein EngB (Edwardsiella ictaluri (strain 93-146)).